Here is a 466-residue protein sequence, read N- to C-terminus: Coagulation factor IX (466 aa).

Positions 1–25 (MRCLNMIMAEPPGLITICLLGYLLG) are cleaved as a signal peptide. A propeptide spanning residues 26-46 (ADCTVFLDHEDATKVLSRPKR) is cleaved from the precursor. Ca(2+)-binding residues include tyrosine 47, asparagine 48, glutamate 53, glutamate 54, glutamate 61, glutamate 63, glutamate 66, glutamate 67, glutamate 72, glutamate 73, and glutamate 76. In terms of domain architecture, Gla spans 47–92 (YNSGKLEEFVQGNLERECMEEKCSFEEAREVFENTEKTTEFWKQYV). Glutamate 53, glutamate 54, glutamate 61, glutamate 63, glutamate 66, glutamate 67, glutamate 72, glutamate 73, glutamate 76, glutamate 79, and glutamate 82 each carry 4-carboxyglutamate. Glutamate 61 contacts Mg(2+). Cysteine 64 and cysteine 69 are oxidised to a cystine. Glutamate 66 contributes to the Mg(2+) binding site. Glutamate 72 is a binding site for Mg(2+). Glutamate 76 is a Mg(2+) binding site. Glutamate 82 lines the Ca(2+) pocket. Glutamate 82 provides a ligand contact to Mg(2+). A glycan (O-linked (GalNAc...) threonine) is linked at threonine 85. Glutamate 86, aspartate 93, glycine 94, and glutamine 96 together coordinate Ca(2+). The residue at position 86 (glutamate 86) is a 4-carboxyglutamate. Residue glutamate 86 coordinates Mg(2+). The 37-residue stretch at 93 to 129 (DGDQCESNPCLNGGICKDDINSYECWCQTGFEGKNCE) folds into the EGF-like 1; calcium-binding domain. Disulfide bonds link cysteine 97-cysteine 108, cysteine 102-cysteine 117, cysteine 119-cysteine 128, cysteine 134-cysteine 145, cysteine 141-cysteine 155, cysteine 157-cysteine 170, cysteine 178-cysteine 340, cysteine 257-cysteine 273, cysteine 387-cysteine 401, and cysteine 412-cysteine 440. O-linked (Glc...) serine glycosylation is present at serine 99. Residues aspartate 110 and aspartate 111 each contribute to the Ca(2+) site. Aspartate 110 bears the (3R)-3-hydroxyaspartate mark. Serine 114 carries the phosphoserine modification. An EGF-like 2 domain is found at 130 to 171 (LDVTCNIKNGRCKQFCKLDADNKVVCSCTTGYQLAEDQKSCE). A propeptide spans 193-231 (AETLFLNMDYENSTTDYENSAEAEKNVDNVTQPLNDLTR) (activation peptide). Tyrosine 202 is subject to Sulfotyrosine. Phosphoserine is present on serine 205. Residue threonine 206 is modified to Phosphothreonine; alternate. An O-linked (GalNAc...) threonine; alternate glycan is attached at threonine 206. N-linked (GlcNAc...) asparagine glycosylation is present at asparagine 221. Residues threonine 223 and threonine 230 are each glycosylated (O-linked (GalNAc...) threonine). Residues 232–464 (IVGGKTAKPG…YVNWIKEKTK (233 aa)) form the Peptidase S1 domain. The Charge relay system role is filled by histidine 272. Glutamate 286, asparagine 288, glutamate 291, glutamate 293, and glutamate 296 together coordinate Ca(2+). Aspartate 320 functions as the Charge relay system in the catalytic mechanism. Serine 416 functions as the Charge relay system in the catalytic mechanism.

Belongs to the peptidase S1 family. In terms of assembly, heterodimer of a light chain and a heavy chain; disulfide-linked. Interacts (inactive and activated) with F11 (activated) in calcium-dependent manner. Interacts with SERPINC1. Post-translationally, the iron and 2-oxoglutarate dependent 3-hydroxylation of aspartate and asparagine is (R) stereospecific within EGF domains. Activated by factor XIa, which excises the activation peptide. The propeptide can also be removed by snake venom protease. Activated by coagulation factor VIIa-tissue factor (F7-F3) complex in calcium-dependent manner. In terms of processing, predominantly O-glucosylated at Ser-99 by POGLUT1 in vitro.

The protein resides in the secreted. The catalysed reaction is Selective cleavage of Arg-|-Ile bond in factor X to form factor Xa.. In terms of biological role, factor IX is a vitamin K-dependent plasma protein that participates in the intrinsic pathway of blood coagulation by converting factor X to its active form in the presence of Ca(2+) ions, phospholipids, and factor VIIIa. This Felis catus (Cat) protein is Coagulation factor IX (F9).